A 486-amino-acid chain; its full sequence is Ribulose bisphosphate carboxylase large chain (486 aa).

The substrate site is built by asparagine 126 and threonine 176. The Proton acceptor role is filled by lysine 178. Substrate is bound at residue lysine 180. 3 residues coordinate Mg(2+): lysine 204, aspartate 206, and glutamate 207. Position 204 is an N6-carboxylysine (lysine 204). The active-site Proton acceptor is the histidine 296. Arginine 297, histidine 329, and serine 381 together coordinate substrate.

It belongs to the RuBisCO large chain family. Type I subfamily. In terms of assembly, heterohexadecamer of 8 large chains and 8 small chains. Mg(2+) is required as a cofactor.

It carries out the reaction 2 (2R)-3-phosphoglycerate + 2 H(+) = D-ribulose 1,5-bisphosphate + CO2 + H2O. It catalyses the reaction D-ribulose 1,5-bisphosphate + O2 = 2-phosphoglycolate + (2R)-3-phosphoglycerate + 2 H(+). Functionally, ruBisCO catalyzes two reactions: the carboxylation of D-ribulose 1,5-bisphosphate, the primary event in carbon dioxide fixation, as well as the oxidative fragmentation of the pentose substrate. Both reactions occur simultaneously and in competition at the same active site. This is Ribulose bisphosphate carboxylase large chain from Rhizobium meliloti (strain 1021) (Ensifer meliloti).